The following is a 255-amino-acid chain: Sugar fermentation stimulation protein homolog (255 aa).

The protein belongs to the SfsA family.

This chain is Sugar fermentation stimulation protein homolog, found in Synechococcus sp. (strain WH7803).